The following is a 266-amino-acid chain: Cytochrome c oxidase assembly factor 7 homolog (266 aa).

Sel1-like repeat units follow at residues 32–64 (PEAC…DDYG) and 66–104 (AKSC…NLND). Low complexity predominate over residues 166-179 (AVTASSGSGTSSPP). A disordered region spans residues 166-187 (AVTASSGSGTSSPPAGQPPLKD). One copy of the Sel1-like 3 repeat lies at 212 to 247 (MYACANLSQMYARGDGIEKNEKEAEKYKKLALEMQD).

It belongs to the hcp beta-lactamase family.

Required for locomotion. Probably involved in the regulation of formation/maintenance of motor neurons at presynaptic terminals at the neuromuscular junction. In Drosophila melanogaster (Fruit fly), this protein is Cytochrome c oxidase assembly factor 7 homolog.